Here is a 351-residue protein sequence, read N- to C-terminus: Histidinol-phosphate aminotransferase 1 (351 aa).

N6-(pyridoxal phosphate)lysine is present on Lys210.

Belongs to the class-II pyridoxal-phosphate-dependent aminotransferase family. Histidinol-phosphate aminotransferase subfamily. In terms of assembly, homodimer. The cofactor is pyridoxal 5'-phosphate.

It catalyses the reaction L-histidinol phosphate + 2-oxoglutarate = 3-(imidazol-4-yl)-2-oxopropyl phosphate + L-glutamate. It participates in amino-acid biosynthesis; L-histidine biosynthesis; L-histidine from 5-phospho-alpha-D-ribose 1-diphosphate: step 7/9. In Pasteurella multocida (strain Pm70), this protein is Histidinol-phosphate aminotransferase 1 (hisC1).